The following is a 283-amino-acid chain: Formamidopyrimidine-DNA glycosylase (283 aa).

Residue Pro-2 is the Schiff-base intermediate with DNA of the active site. The active-site Proton donor is the Glu-3. The Proton donor; for beta-elimination activity role is filled by Lys-58. Residues His-100, Arg-119, and Arg-162 each coordinate DNA. Residues 247-283 (DVYGREGEPCRRAGCDGTVQRITQSGRSSFYCAQCQR) form an FPG-type zinc finger. Catalysis depends on Arg-273, which acts as the Proton donor; for delta-elimination activity.

It belongs to the FPG family. In terms of assembly, monomer. The cofactor is Zn(2+).

The enzyme catalyses Hydrolysis of DNA containing ring-opened 7-methylguanine residues, releasing 2,6-diamino-4-hydroxy-5-(N-methyl)formamidopyrimidine.. It carries out the reaction 2'-deoxyribonucleotide-(2'-deoxyribose 5'-phosphate)-2'-deoxyribonucleotide-DNA = a 3'-end 2'-deoxyribonucleotide-(2,3-dehydro-2,3-deoxyribose 5'-phosphate)-DNA + a 5'-end 5'-phospho-2'-deoxyribonucleoside-DNA + H(+). In terms of biological role, involved in base excision repair of DNA damaged by oxidation or by mutagenic agents. Acts as a DNA glycosylase that recognizes and removes damaged bases. Has a preference for oxidized purines, such as 7,8-dihydro-8-oxoguanine (8-oxoG). Has AP (apurinic/apyrimidinic) lyase activity and introduces nicks in the DNA strand. Cleaves the DNA backbone by beta-delta elimination to generate a single-strand break at the site of the removed base with both 3'- and 5'-phosphates. The polypeptide is Formamidopyrimidine-DNA glycosylase (Ruegeria pomeroyi (strain ATCC 700808 / DSM 15171 / DSS-3) (Silicibacter pomeroyi)).